Here is a 156-residue protein sequence, read N- to C-terminus: Small ribosomal subunit protein uS7 (156 aa).

It belongs to the universal ribosomal protein uS7 family. In terms of assembly, part of the 30S ribosomal subunit. Contacts proteins S9 and S11.

In terms of biological role, one of the primary rRNA binding proteins, it binds directly to 16S rRNA where it nucleates assembly of the head domain of the 30S subunit. Is located at the subunit interface close to the decoding center, probably blocks exit of the E-site tRNA. The chain is Small ribosomal subunit protein uS7 from Geotalea daltonii (strain DSM 22248 / JCM 15807 / FRC-32) (Geobacter daltonii).